We begin with the raw amino-acid sequence, 489 residues long: L-asparagine permease (489 aa).

12 helical membrane passes run 38–58 (HVNMIAIGGAIGTGLFLGAGG), 62–82 (DAGPALAIAYLVAGVFAFFVV), 113–133 (VAGWMYFLNWSTTGIADITAI), 150–170 (VLALVALAVVLAVNLISVKIF), 175–195 (FWFAIVKVATLVGFMLIGIFL), 223–243 (VMPVVLVMQGVIFSYAALELV), 268–288 (VALFYVGSVVLLALLLPSSLY), 302–322 (IGVPAAGDVMNLVVLTAAMSS), 357–377 (YGGILLTCAVCVLGVGLNYLV), 382–402 (FEIVLNVASLGIISTWVIIMI), 426–446 (SPVTEIVTIAFLLAVVGLMWN), and 452–472 (RKTVLLVPVIAVMLVAGWFGV).

It belongs to the amino acid-polyamine-organocation (APC) superfamily. Amino acid transporter (AAT) (TC 2.A.3.1) family.

The protein localises to the cell membrane. This chain is L-asparagine permease (ansP), found in Streptomyces coelicolor (strain ATCC BAA-471 / A3(2) / M145).